A 567-amino-acid chain; its full sequence is Alpha-glucosidase (567 aa).

The first 17 residues, 1–17 (MKAVIVFCLMALSIVDA), serve as a signal peptide directing secretion. N88 and N123 each carry an N-linked (GlcNAc...) asparagine glycan. D223 functions as the Nucleophile in the catalytic mechanism. N-linked (GlcNAc...) asparagine glycosylation is present at N247. Catalysis depends on E286, which acts as the Proton donor. 5 N-linked (GlcNAc...) asparagine glycosylation sites follow: N290, N313, N319, N499, and N507.

Monomer. In terms of tissue distribution, expressed specifically in the hypopharyngeal glands of worker bees. Also found in the brain of worker bees (at protein level).

The enzyme catalyses Hydrolysis of terminal, non-reducing (1-&gt;4)-linked alpha-D-glucose residues with release of alpha-D-glucose.. In terms of biological role, converts sucrose in nectar to glucose and fructose. The sequence is that of Alpha-glucosidase from Apis mellifera (Honeybee).